Here is a 299-residue protein sequence, read N- to C-terminus: Homoserine kinase (299 aa).

P88 to T98 serves as a coordination point for ATP.

This sequence belongs to the GHMP kinase family. Homoserine kinase subfamily.

It localises to the cytoplasm. The catalysed reaction is L-homoserine + ATP = O-phospho-L-homoserine + ADP + H(+). Its pathway is amino-acid biosynthesis; L-threonine biosynthesis; L-threonine from L-aspartate: step 4/5. Its function is as follows. Catalyzes the ATP-dependent phosphorylation of L-homoserine to L-homoserine phosphate. The sequence is that of Homoserine kinase from Gloeobacter violaceus (strain ATCC 29082 / PCC 7421).